Reading from the N-terminus, the 435-residue chain is Zinc finger CCCH domain-containing protein 16 (435 aa).

A C3H1-type zinc finger spans residues 1 to 27 (MRKELCRNFQRGSCRYGENCRFLHPQQ). The 6 X 2 AA repeats of F-G stretch occupies residues 2–88 (RKELCRNFQR…ASTPTGGGAA (87 aa)). Disordered regions lie at residues 25-105 (PQQA…DHKC) and 205-374 (TPSI…SQNN). Repeat copies occupy residues 34 to 35 (FG) and 36 to 37 (FG). A compositionally biased stretch (low complexity) spans 39-51 (QNQQQQQQQQQQN). 2 repeat units span residues 56–57 (FG) and 58–59 (FG). Over residues 63–77 (GGSSRPNQFQNTWSR) the composition is skewed to polar residues. Over residues 78–99 (TASTPTGGGAAASTQQTGKQTQ) the composition is skewed to low complexity. Polar residues-rich tracts occupy residues 205 to 320 (TPSI…VNTP) and 328 to 339 (SGFQTNPSTTFK). A run of 2 repeats spans residues 343–344 (FG) and 359–360 (FG). Positions 351-374 (TTPQNNNIFGQSTPTPATNTSQNN) are enriched in polar residues.

Part of the nuclear pore complex (NPC). The NPC has an eight-fold symmetrical structure comprising a central transport channel and two rings, the cytoplasmic and nuclear rings, to which eight filaments are attached. The cytoplasmic filaments have loose ends, while the nuclear filaments are joined in a distal ring, forming a nuclear basket. NPCs are highly dynamic in configuration and composition, and can be devided in 3 subcomplexes, the NUP62 subcomplex, the NUP107-160 subcomplex and the NUP93 subcomplex, containing approximately 30 different nucleoporin proteins.

It is found in the nucleus envelope. It localises to the nucleus. The protein localises to the nuclear pore complex. This Arabidopsis thaliana (Mouse-ear cress) protein is Zinc finger CCCH domain-containing protein 16.